A 476-amino-acid polypeptide reads, in one-letter code: Aspartyl/glutamyl-tRNA(Asn/Gln) amidotransferase subunit B (476 aa).

This sequence belongs to the GatB/GatE family. GatB subfamily. In terms of assembly, heterotrimer of A, B and C subunits.

It carries out the reaction L-glutamyl-tRNA(Gln) + L-glutamine + ATP + H2O = L-glutaminyl-tRNA(Gln) + L-glutamate + ADP + phosphate + H(+). The catalysed reaction is L-aspartyl-tRNA(Asn) + L-glutamine + ATP + H2O = L-asparaginyl-tRNA(Asn) + L-glutamate + ADP + phosphate + 2 H(+). Functionally, allows the formation of correctly charged Asn-tRNA(Asn) or Gln-tRNA(Gln) through the transamidation of misacylated Asp-tRNA(Asn) or Glu-tRNA(Gln) in organisms which lack either or both of asparaginyl-tRNA or glutaminyl-tRNA synthetases. The reaction takes place in the presence of glutamine and ATP through an activated phospho-Asp-tRNA(Asn) or phospho-Glu-tRNA(Gln). The chain is Aspartyl/glutamyl-tRNA(Asn/Gln) amidotransferase subunit B from Bacillus cytotoxicus (strain DSM 22905 / CIP 110041 / 391-98 / NVH 391-98).